The chain runs to 429 residues: Small ribosomal subunit protein bS1 (429 aa).

S1 motif domains are found at residues 55 to 128 (GDVV…LSKK), 144 to 211 (GDTV…SRKA), 231 to 299 (GEVV…LSIK), and 316 to 385 (GSVL…LSMK). The span at 382–399 (LSMKALEEKPEREDRRGN) shows a compositional bias: basic and acidic residues. Residues 382–412 (LSMKALEEKPEREDRRGNDGSASRADIAAYK) are disordered.

It belongs to the bacterial ribosomal protein bS1 family.

In terms of biological role, binds mRNA; thus facilitating recognition of the initiation point. It is needed to translate mRNA with a short Shine-Dalgarno (SD) purine-rich sequence. This Leuconostoc lactis protein is Small ribosomal subunit protein bS1 (rps1).